Consider the following 522-residue polypeptide: GMP synthase [glutamine-hydrolyzing] (522 aa).

One can recognise a Glutamine amidotransferase type-1 domain in the interval 9–204 (KILILDFGAQ…VVDICGCQTL (196 aa)). The active-site Nucleophile is the cysteine 86. Catalysis depends on residues histidine 178 and glutamate 180. Residues 205-397 (WTSANIIEDQ…LGLPHAMVYR (193 aa)) form the GMPS ATP-PPase domain. 232–238 (SGGVDSS) lines the ATP pocket.

As to quaternary structure, homodimer.

It catalyses the reaction XMP + L-glutamine + ATP + H2O = GMP + L-glutamate + AMP + diphosphate + 2 H(+). The protein operates within purine metabolism; GMP biosynthesis; GMP from XMP (L-Gln route): step 1/1. Its function is as follows. Catalyzes the synthesis of GMP from XMP. In Xylella fastidiosa (strain M23), this protein is GMP synthase [glutamine-hydrolyzing].